A 353-amino-acid chain; its full sequence is Photosystem II protein D1 (353 aa).

Thr-2 is subject to N-acetylthreonine. At Thr-2 the chain carries Phosphothreonine. A run of 3 helical transmembrane segments spans residues 29–46 (YIGWFGVLMIPTLLTATS), 118–133 (HFLLGVACYMGREWEL), and 142–156 (WIAVAYSAPVAAATA). A chlorophyll a-binding site is contributed by His-118. Tyr-126 is a binding site for pheophytin a. Residues Asp-170 and Glu-189 each contribute to the [CaMn4O5] cluster site. The chain crosses the membrane as a helical span at residues 197-218 (FHMLGVAGVFGGSLFSAMHGSL). Residue His-198 participates in chlorophyll a binding. A quinone is bound by residues His-215 and 264-265 (SF). His-215 provides a ligand contact to Fe cation. His-272 serves as a coordination point for Fe cation. The helical transmembrane segment at 274-288 (FLAAWPVVGIWFTAL) threads the bilayer. The [CaMn4O5] cluster site is built by His-332, Glu-333, Asp-342, and Ala-344. Positions 345–353 (AVEANSIDG) are excised as a propeptide.

This sequence belongs to the reaction center PufL/M/PsbA/D family. As to quaternary structure, PSII is composed of 1 copy each of membrane proteins PsbA, PsbB, PsbC, PsbD, PsbE, PsbF, PsbH, PsbI, PsbJ, PsbK, PsbL, PsbM, PsbT, PsbX, PsbY, PsbZ, Psb30/Ycf12, at least 3 peripheral proteins of the oxygen-evolving complex and a large number of cofactors. It forms dimeric complexes. The D1/D2 heterodimer binds P680, chlorophylls that are the primary electron donor of PSII, and subsequent electron acceptors. It shares a non-heme iron and each subunit binds pheophytin, quinone, additional chlorophylls, carotenoids and lipids. D1 provides most of the ligands for the Mn4-Ca-O5 cluster of the oxygen-evolving complex (OEC). There is also a Cl(-1) ion associated with D1 and D2, which is required for oxygen evolution. The PSII complex binds additional chlorophylls, carotenoids and specific lipids. serves as cofactor. Post-translationally, tyr-161 forms a radical intermediate that is referred to as redox-active TyrZ, YZ or Y-Z. In terms of processing, C-terminally processed by CTPA; processing is essential to allow assembly of the oxygen-evolving complex and thus photosynthetic growth.

Its subcellular location is the plastid. The protein localises to the chloroplast thylakoid membrane. The catalysed reaction is 2 a plastoquinone + 4 hnu + 2 H2O = 2 a plastoquinol + O2. In terms of biological role, photosystem II (PSII) is a light-driven water:plastoquinone oxidoreductase that uses light energy to abstract electrons from H(2)O, generating O(2) and a proton gradient subsequently used for ATP formation. It consists of a core antenna complex that captures photons, and an electron transfer chain that converts photonic excitation into a charge separation. The D1/D2 (PsbA/PsbD) reaction center heterodimer binds P680, the primary electron donor of PSII as well as several subsequent electron acceptors. The sequence is that of Photosystem II protein D1 from Cryptomeria japonica (Japanese cedar).